Here is a 694-residue protein sequence, read N- to C-terminus: Methionine--tRNA ligase (694 aa).

The short motif at 12 to 22 is the 'HIGH' region element; sequence PYANGPLHLGH. Zn(2+) contacts are provided by cysteine 143, cysteine 146, cysteine 156, and cysteine 159. Residues 330-334 carry the 'KMSKS' region motif; the sequence is KMSKS. Lysine 333 is a binding site for ATP. The tract at residues 552–577 is disordered; the sequence is APAAPAATTKPAPSKADAAPAAVANP. A tRNA-binding domain is found at 591–694; it reads DFAKLDLRIG…AGAQPGMPVR (104 aa).

This sequence belongs to the class-I aminoacyl-tRNA synthetase family. MetG type 1 subfamily. In terms of assembly, homodimer. Requires Zn(2+) as cofactor.

Its subcellular location is the cytoplasm. It carries out the reaction tRNA(Met) + L-methionine + ATP = L-methionyl-tRNA(Met) + AMP + diphosphate. Its function is as follows. Is required not only for elongation of protein synthesis but also for the initiation of all mRNA translation through initiator tRNA(fMet) aminoacylation. In Xanthomonas campestris pv. campestris (strain B100), this protein is Methionine--tRNA ligase.